The sequence spans 645 residues: Translation factor GUF1 homolog, mitochondrial (645 aa).

The tr-type G domain occupies aspartate 40–threonine 215. GTP contacts are provided by residues alanine 49–serine 56, aspartate 108–histidine 112, and asparagine 162–aspartate 165.

It belongs to the TRAFAC class translation factor GTPase superfamily. Classic translation factor GTPase family. LepA subfamily.

Its subcellular location is the mitochondrion inner membrane. It carries out the reaction GTP + H2O = GDP + phosphate + H(+). Functionally, promotes mitochondrial protein synthesis. May act as a fidelity factor of the translation reaction, by catalyzing a one-codon backward translocation of tRNAs on improperly translocated ribosomes. Binds to mitochondrial ribosomes in a GTP-dependent manner. This is Translation factor GUF1 homolog, mitochondrial from Caenorhabditis elegans.